Consider the following 66-residue polypeptide: Muscarinic toxin 4 (66 aa).

Disulfide bonds link cysteine 3–cysteine 24, cysteine 17–cysteine 42, cysteine 46–cysteine 58, and cysteine 59–cysteine 64.

This sequence belongs to the three-finger toxin family. Short-chain subfamily. Aminergic toxin sub-subfamily. As to quaternary structure, monomer. Expressed by the venom gland.

The protein resides in the secreted. Binds to the muscarinic acetylcholine receptor (CHRM). This is Muscarinic toxin 4 from Dendroaspis angusticeps (Eastern green mamba).